Here is a 342-residue protein sequence, read N- to C-terminus: Ferrochelatase (342 aa).

Residues histidine 188 and glutamate 268 each contribute to the Fe cation site.

The protein belongs to the ferrochelatase family.

The protein resides in the cytoplasm. It carries out the reaction heme b + 2 H(+) = protoporphyrin IX + Fe(2+). It participates in porphyrin-containing compound metabolism; protoheme biosynthesis; protoheme from protoporphyrin-IX: step 1/1. Catalyzes the ferrous insertion into protoporphyrin IX. In Rickettsia typhi (strain ATCC VR-144 / Wilmington), this protein is Ferrochelatase.